Consider the following 541-residue polypeptide: Chaperonin GroEL 2 (541 aa).

Residues 29–32, 86–90, Gly413, 476–478, and Asp492 each bind ATP; these read TLGP, DGTTT, and NAA.

This sequence belongs to the chaperonin (HSP60) family. As to quaternary structure, forms a cylinder of 14 subunits composed of two heptameric rings stacked back-to-back. Interacts with the co-chaperonin GroES.

The protein resides in the cytoplasm. It catalyses the reaction ATP + H2O + a folded polypeptide = ADP + phosphate + an unfolded polypeptide.. In terms of biological role, together with its co-chaperonin GroES, plays an essential role in assisting protein folding. The GroEL-GroES system forms a nano-cage that allows encapsulation of the non-native substrate proteins and provides a physical environment optimized to promote and accelerate protein folding. In Streptomyces coelicolor (strain ATCC BAA-471 / A3(2) / M145), this protein is Chaperonin GroEL 2.